Consider the following 703-residue polypeptide: UvrABC system protein B (703 aa).

Residues glutamate 33–arginine 419 form the Helicase ATP-binding domain. Glycine 46–threonine 53 provides a ligand contact to ATP. The Beta-hairpin motif lies at tyrosine 99–isoleucine 122. The region spanning glutamine 436 to isoleucine 589 is the Helicase C-terminal domain. One can recognise a UVR domain in the interval alanine 659–glutamate 694.

Belongs to the UvrB family. As to quaternary structure, forms a heterotetramer with UvrA during the search for lesions. Interacts with UvrC in an incision complex.

The protein localises to the cytoplasm. Its function is as follows. The UvrABC repair system catalyzes the recognition and processing of DNA lesions. A damage recognition complex composed of 2 UvrA and 2 UvrB subunits scans DNA for abnormalities. Upon binding of the UvrA(2)B(2) complex to a putative damaged site, the DNA wraps around one UvrB monomer. DNA wrap is dependent on ATP binding by UvrB and probably causes local melting of the DNA helix, facilitating insertion of UvrB beta-hairpin between the DNA strands. Then UvrB probes one DNA strand for the presence of a lesion. If a lesion is found the UvrA subunits dissociate and the UvrB-DNA preincision complex is formed. This complex is subsequently bound by UvrC and the second UvrB is released. If no lesion is found, the DNA wraps around the other UvrB subunit that will check the other stand for damage. In Bifidobacterium longum (strain NCC 2705), this protein is UvrABC system protein B.